A 178-amino-acid polypeptide reads, in one-letter code: Large ribosomal subunit protein uL6 (178 aa).

Belongs to the universal ribosomal protein uL6 family. Part of the 50S ribosomal subunit.

This protein binds to the 23S rRNA, and is important in its secondary structure. It is located near the subunit interface in the base of the L7/L12 stalk, and near the tRNA binding site of the peptidyltransferase center. The protein is Large ribosomal subunit protein uL6 of Streptococcus pneumoniae serotype 19F (strain G54).